Consider the following 476-residue polypeptide: Stromelysin-2 (476 aa).

The N-terminal stretch at 1-17 (MEPLAILALLSLPICSA) is a signal peptide. The propeptide at 18-99 (YPLHGAVTQG…PRCGVPDVGG (82 aa)) is activation peptide. The short motif at 90–97 (PRCGVPDV) is the Cysteine switch element. C92, H168, D170, H183, H196, and H218 together coordinate Zn(2+). E219 is an active-site residue. H222 and H228 together coordinate Zn(2+). Hemopexin repeat units lie at residues 286–335 (PDKC…WPTL), 336–382 (PSDL…GFPP), 384–432 (VKKI…FPGI), and 433–476 (EPQV…WLLC). Residues C289 and C476 are joined by a disulfide bond.

It belongs to the peptidase M10A family. Zn(2+) is required as a cofactor. Ca(2+) serves as cofactor. Expressed in small intestine. Weak levels in heart and lung.

The protein resides in the secreted. The protein localises to the extracellular space. It localises to the extracellular matrix. The enzyme catalyses Similar to stromelysin 1, but action on collagen types III, IV and V is weak.. Its function is as follows. Can degrade fibronectin, gelatins of type I, III, IV, and V; weakly collagens III, IV, and V. Activates procollagenase. The polypeptide is Stromelysin-2 (Mmp10) (Mus musculus (Mouse)).